Here is a 648-residue protein sequence, read N- to C-terminus: Serine/threonine-protein kinase DCLK3 (648 aa).

2 disordered regions span residues 86–127 (DDRA…HLGV) and 150–345 (QSLE…PRPM). 5 stretches are compositionally biased toward basic and acidic residues: residues 98–127 (GKWE…HLGV), 213–234 (ELRR…DQES), 255–266 (EGLREVKKDTRP), 277–303 (LREH…EKKP), and 312–338 (TLRD…ERPS). Residues 356–613 (YETGRVIGDG…AHQVLQHPWI (258 aa)) form the Protein kinase domain. ATP-binding positions include 362-370 (IGDGNFAVV) and lysine 385. Catalysis depends on aspartate 477, which acts as the Proton acceptor. The tract at residues 628 to 648 (VSPSSEGHFRSQHKRVVEQVS) is disordered.

The protein belongs to the protein kinase superfamily. CAMK Ser/Thr protein kinase family. CaMK subfamily.

Its subcellular location is the cytoplasm. The protein resides in the nucleus. It catalyses the reaction L-seryl-[protein] + ATP = O-phospho-L-seryl-[protein] + ADP + H(+). The catalysed reaction is L-threonyl-[protein] + ATP = O-phospho-L-threonyl-[protein] + ADP + H(+). This chain is Serine/threonine-protein kinase DCLK3 (DCLK3), found in Homo sapiens (Human).